A 283-amino-acid chain; its full sequence is Protein/nucleic acid deglycase HchA (283 aa).

Zn(2+)-binding residues include His86, Glu91, and His123. Catalysis depends on Cys185, which acts as the Nucleophile.

The protein belongs to the peptidase C56 family. HchA subfamily. As to quaternary structure, homodimer.

Its subcellular location is the cytoplasm. The catalysed reaction is N(omega)-(1-hydroxy-2-oxopropyl)-L-arginyl-[protein] + H2O = lactate + L-arginyl-[protein] + H(+). The enzyme catalyses N(6)-(1-hydroxy-2-oxopropyl)-L-lysyl-[protein] + H2O = lactate + L-lysyl-[protein] + H(+). It carries out the reaction S-(1-hydroxy-2-oxopropyl)-L-cysteinyl-[protein] + H2O = lactate + L-cysteinyl-[protein] + H(+). It catalyses the reaction N(omega)-(1-hydroxy-2-oxoethyl)-L-arginyl-[protein] + H2O = L-arginyl-[protein] + glycolate + H(+). The catalysed reaction is N(6)-(1-hydroxy-2-oxoethyl)-L-lysyl-[protein] + H2O = glycolate + L-lysyl-[protein] + H(+). The enzyme catalyses S-(1-hydroxy-2-oxoethyl)-L-cysteinyl-[protein] + H2O = glycolate + L-cysteinyl-[protein] + H(+). It carries out the reaction N(2)-(1-hydroxy-2-oxopropyl)-dGTP + H2O = lactate + dGTP + H(+). It catalyses the reaction N(2)-(1-hydroxy-2-oxopropyl)-GTP + H2O = lactate + GTP + H(+). The catalysed reaction is N(2)-(1-hydroxy-2-oxopropyl)-GDP + H2O = lactate + GDP + H(+). The enzyme catalyses N(2)-(1-hydroxy-2-oxopropyl)-GMP + H2O = lactate + GMP + H(+). It carries out the reaction N(2)-(1-hydroxy-2-oxoethyl)-dGTP + H2O = dGTP + glycolate + H(+). It catalyses the reaction N(2)-(1-hydroxy-2-oxoethyl)-GTP + H2O = glycolate + GTP + H(+). The catalysed reaction is N(2)-(1-hydroxy-2-oxoethyl)-GDP + H2O = glycolate + GDP + H(+). The enzyme catalyses N(2)-(1-hydroxy-2-oxoethyl)-GMP + H2O = glycolate + GMP + H(+). It carries out the reaction an N(2)-(1-hydroxy-2-oxopropyl)-guanosine in RNA + H2O = a guanosine in RNA + lactate + H(+). It catalyses the reaction an N(2)-(1-hydroxy-2-oxopropyl)-2'-deoxyguanosine in DNA + H2O = a 2'-deoxyguanosine in DNA + lactate + H(+). The catalysed reaction is an N(2)-(1-hydroxy-2-oxoethyl)-guanosine in RNA + H2O = a guanosine in RNA + glycolate + H(+). The enzyme catalyses an N(2)-(1-hydroxy-2-oxoethyl)-2'-deoxyguanosine in DNA + H2O = a 2'-deoxyguanosine in DNA + glycolate + H(+). Functionally, protein and nucleotide deglycase that catalyzes the deglycation of the Maillard adducts formed between amino groups of proteins or nucleotides and reactive carbonyl groups of glyoxals. Thus, functions as a protein deglycase that repairs methylglyoxal- and glyoxal-glycated proteins, and releases repaired proteins and lactate or glycolate, respectively. Deglycates cysteine, arginine and lysine residues in proteins, and thus reactivates these proteins by reversing glycation by glyoxals. Acts on early glycation intermediates (hemithioacetals and aminocarbinols), preventing the formation of Schiff bases and advanced glycation endproducts (AGE). Also functions as a nucleotide deglycase able to repair glycated guanine in the free nucleotide pool (GTP, GDP, GMP, dGTP) and in DNA and RNA. Is thus involved in a major nucleotide repair system named guanine glycation repair (GG repair), dedicated to reversing methylglyoxal and glyoxal damage via nucleotide sanitization and direct nucleic acid repair. Plays an important role in protecting cells from carbonyl stress. This is Protein/nucleic acid deglycase HchA from Escherichia coli O7:K1 (strain IAI39 / ExPEC).